The chain runs to 258 residues: Indole-3-glycerol phosphate synthase (258 aa).

Belongs to the TrpC family.

It catalyses the reaction 1-(2-carboxyphenylamino)-1-deoxy-D-ribulose 5-phosphate + H(+) = (1S,2R)-1-C-(indol-3-yl)glycerol 3-phosphate + CO2 + H2O. It functions in the pathway amino-acid biosynthesis; L-tryptophan biosynthesis; L-tryptophan from chorismate: step 4/5. The polypeptide is Indole-3-glycerol phosphate synthase (Chlorobium limicola (strain DSM 245 / NBRC 103803 / 6330)).